The sequence spans 278 residues: Undecaprenyl-diphosphatase 3 (278 aa).

A run of 6 helical transmembrane segments spans residues 42 to 62 (DITA…LLYF), 88 to 108 (YRFG…GVAF), 119 to 139 (LWFV…ADHV), 187 to 207 (VAVT…AAAL), 224 to 244 (ATII…AWLL), and 254 to 274 (VFIG…ATGI).

The protein belongs to the UppP family.

It is found in the cell membrane. The catalysed reaction is di-trans,octa-cis-undecaprenyl diphosphate + H2O = di-trans,octa-cis-undecaprenyl phosphate + phosphate + H(+). Catalyzes the dephosphorylation of undecaprenyl diphosphate (UPP). Confers resistance to bacitracin. In Frankia casuarinae (strain DSM 45818 / CECT 9043 / HFP020203 / CcI3), this protein is Undecaprenyl-diphosphatase 3.